The sequence spans 230 residues: MSKAVVVFSGGQDSTTCLVQALSQFDEVHAITFDYGQRHSEEIEVAKALTSELGCASHKIMDVSLLGELAISALTRDAIPVSHELMDNGLPNTFVPGRNILFLTLAGIYAYQLGADTVITGVCETDFSGYPDCRNDFIKAMEQALNLGMDKQLNIHTPLMWLNKAETWALADRYGKLELVRNHTLTCYNGIRGDGCGDCPACHLRKRGLEDYLSNRDAVNAELTKKTGAN.

ATP is bound at residue 8–18 (FSGGQDSTTCL). 4 residues coordinate Zn(2+): C187, C196, C199, and C202.

It belongs to the QueC family. It depends on Zn(2+) as a cofactor.

It catalyses the reaction 7-carboxy-7-deazaguanine + NH4(+) + ATP = 7-cyano-7-deazaguanine + ADP + phosphate + H2O + H(+). It functions in the pathway purine metabolism; 7-cyano-7-deazaguanine biosynthesis. Catalyzes the ATP-dependent conversion of 7-carboxy-7-deazaguanine (CDG) to 7-cyano-7-deazaguanine (preQ(0)). This is 7-cyano-7-deazaguanine synthase from Shewanella amazonensis (strain ATCC BAA-1098 / SB2B).